A 2026-amino-acid polypeptide reads, in one-letter code: Fatty acid synthase subunit beta (2026 aa).

The segment at 148–526 (ILMAFGGQGS…VDGRGVRIIA (379 aa)) is acetyltransferase (AT) domain. S268 functions as the For acetyltransferase activity in the catalytic mechanism. An enoyl reductase (ER) domain region spans residues 579–824 (SQLLQAPPII…LILAAAGVAD (246 aa)). The tract at residues 1130-1604 (SQVTGSVRSA…LPGDQLTVRI (475 aa)) is dehydratase (DH) domain. The region spanning 1512–1625 (PGLIDNGSRT…LSVAAYREGT (114 aa)) is the MaoC-like domain. Residues 1643–2016 (YLFTGQGSQA…LEEAAAVTGS (374 aa)) are malonyl/palmitoyl transferase (MT/PT) domain. The active-site For malonyltransferase activity is S1788.

This sequence belongs to the fungal fatty acid synthetase subunit beta family. [Alpha(6)beta(6)] hexamers of two multifunctional subunits (alpha and beta).

The catalysed reaction is acetyl-CoA + n malonyl-CoA + 2n NADPH + 4n H(+) = a long-chain-acyl-CoA + n CoA + n CO2 + 2n NADP(+).. It catalyses the reaction holo-[ACP] + acetyl-CoA = acetyl-[ACP] + CoA. It carries out the reaction holo-[ACP] + malonyl-CoA = malonyl-[ACP] + CoA. The enzyme catalyses a (3R)-hydroxyacyl-[ACP] = a (2E)-enoyl-[ACP] + H2O. The catalysed reaction is a 2,3-saturated acyl-[ACP] + NAD(+) = a (2E)-enoyl-[ACP] + NADH + H(+). It catalyses the reaction (9Z)-octadecenoyl-[ACP] + H2O = (9Z)-octadecenoate + holo-[ACP] + H(+). It participates in secondary metabolite biosynthesis. Its function is as follows. Fatty acid synthase beta subunit; part of the gene cluster that mediates the biosynthesis of oryzines, natural products with an unusual maleidride backbone. The two subunits of the fungal fatty acid synthase oryfasA and oryfasB probably form octenoic acid. This fatty acid is most likely activated by the acyl-CoA ligase oryP to give octenyl-CoA before the citrate synthase-like protein oryE catalyzes condensation with oxaloacetate to form tricarboxylic acid. The next steps of the pathways are conjectural, but a favorite possible route has been proposed, beginning with decarboxylation and concomitant dehydration by the decarboxylase oryM, followed by tautomerization, which may lead to the production of a diene intermediate. Reduction of this diene intermediate could give the known metabolite piliformic acid. On the pathway to oryzine B and oryzine A, however, hydroxylation of the diene by the alpha-ketoglutarate-dependent dioxygenase oryG and lactonisation by the lactonohydrolases oryH or oryL could give oryzine B directly. Finally, enoyl reduction by the dehydrogenase oryD would then convert oryzine B into oryzine A. The sequence is that of Fatty acid synthase subunit beta from Aspergillus oryzae (strain ATCC 42149 / RIB 40) (Yellow koji mold).